A 230-amino-acid polypeptide reads, in one-letter code: Ureidoacrylate amidohydrolase RutB (230 aa).

The active-site Proton acceptor is D23. K132 is an active-site residue. The active-site Nucleophile is the C165.

Belongs to the isochorismatase family. RutB subfamily.

It catalyses the reaction (Z)-3-ureidoacrylate + H2O + H(+) = (Z)-3-aminoacrylate + NH4(+) + CO2. The enzyme catalyses (Z)-3-ureidoacrylate + H2O = (Z)-3-aminoacrylate + carbamate + H(+). It carries out the reaction (Z)-2-methylureidoacrylate + H2O + H(+) = (Z)-2-methylaminoacrylate + NH4(+) + CO2. In terms of biological role, hydrolyzes ureidoacrylate to form aminoacrylate and carbamate. The carbamate hydrolyzes spontaneously, thereby releasing one of the nitrogen atoms of the pyrimidine ring as ammonia and one of its carbon atoms as CO2. In Yersinia enterocolitica serotype O:8 / biotype 1B (strain NCTC 13174 / 8081), this protein is Ureidoacrylate amidohydrolase RutB.